Here is a 382-residue protein sequence, read N- to C-terminus: Alcohol dehydrogenase 4 (382 aa).

The protein belongs to the iron-containing alcohol dehydrogenase family. In terms of assembly, homodimer. Requires Zn(2+) as cofactor. It depends on Fe(2+) as a cofactor.

Its subcellular location is the mitochondrion. It catalyses the reaction a primary alcohol + NAD(+) = an aldehyde + NADH + H(+). The enzyme catalyses a secondary alcohol + NAD(+) = a ketone + NADH + H(+). Inhibited by EDTA. Functionally, reduces acetaldehyde to ethanol during glucose fermentation. Specific for ethanol. Shows drastically reduced activity towards primary alcohols from 4 carbon atoms upward. Isomers of aliphatic alcohol, as well as secondary alcohols and glycerol are not used at all. This Saccharomyces cerevisiae (strain YJM789) (Baker's yeast) protein is Alcohol dehydrogenase 4 (ADH4).